Consider the following 840-residue polypeptide: Probable alpha-glucuronidase A (840 aa).

The first 19 residues, 1 to 19 (MWSGIPIFALLSSIGIAAA), serve as a signal peptide directing secretion. Asparagine 50, asparagine 149, asparagine 222, asparagine 262, asparagine 279, asparagine 310, asparagine 465, asparagine 527, asparagine 576, asparagine 610, asparagine 682, asparagine 723, and asparagine 732 each carry an N-linked (GlcNAc...) asparagine glycan.

This sequence belongs to the glycosyl hydrolase 67 family.

The protein localises to the secreted. It carries out the reaction an alpha-D-glucuronoside + H2O = D-glucuronate + an alcohol. In terms of biological role, alpha-glucuronidase involved in the hydrolysis of xylan, a major structural heterogeneous polysaccharide found in plant biomass representing the second most abundant polysaccharide in the biosphere, after cellulose. Releases 4-O-methylglucuronic acid from xylan. This chain is Probable alpha-glucuronidase A (aguA), found in Aspergillus fumigatus (strain ATCC MYA-4609 / CBS 101355 / FGSC A1100 / Af293) (Neosartorya fumigata).